The chain runs to 365 residues: Putative F-box/kelch-repeat protein At3g16880 (365 aa).

Residues M1 to Q47 enclose the F-box domain. Kelch repeat units follow at residues R98–S149 and I155–N205.

The chain is Putative F-box/kelch-repeat protein At3g16880 from Arabidopsis thaliana (Mouse-ear cress).